Here is a 130-residue protein sequence, read N- to C-terminus: Ribonuclease P protein component 2 (130 aa).

This sequence belongs to the eukaryotic/archaeal RNase P protein component 2 family. Consists of a catalytic RNA component and at least 4-5 protein subunits.

The protein localises to the cytoplasm. The enzyme catalyses Endonucleolytic cleavage of RNA, removing 5'-extranucleotides from tRNA precursor.. In terms of biological role, part of ribonuclease P, a protein complex that generates mature tRNA molecules by cleaving their 5'-ends. This is Ribonuclease P protein component 2 from Methanococcus maripaludis (strain C6 / ATCC BAA-1332).